Reading from the N-terminus, the 450-residue chain is Transcription factor SCREAM2 (450 aa).

Disordered stretches follow at residues 1-47 (MNSD…NQND), 207-231 (RQSSSSKMCNSESSSEMRKSSYERE), and 244-265 (GLNYESDDHNTNNNKGKKKGMP). Residues 209–220 (SSSSKMCNSESS) are compositionally biased toward low complexity. A compositionally biased stretch (basic and acidic residues) spans 221-230 (SEMRKSSYER). The region spanning 263–312 (GMPAKNLMAERRRRKKLNDRLYMLRSVVPKISKMDRASILGDAIDYLKEL) is the bHLH domain. The ACT domain occupies 378-450 (NIHMFCGRRP…LDTAGYAGLV (73 aa)).

In terms of assembly, homodimer. Heterodimers with SPCH, MUTE, and FAMA. In terms of tissue distribution, expressed constitutively in roots, leaves, stems, and flowers. Broad expression within stomatal cell lineages of leaf epidermis, except in mature guard-cells.

It localises to the nucleus. In terms of biological role, mediates stomatal differentiation in the epidermis probably by controlling successive roles of SPCH, MUTE, and FAMA. Functions as a dimer with SPCH during stomatal initiation. The protein is Transcription factor SCREAM2 (SCRM2) of Arabidopsis thaliana (Mouse-ear cress).